The following is a 255-amino-acid chain: Proliferating cell nuclear antigen 2 (255 aa).

The DNA-binding element occupies 61 to 80 (HCDRNVSLGLDLKSLGKVLK).

Belongs to the PCNA family. Homotrimer. Interacts with the catalytic subunits of two DNA polymerase complexes: PolD1 in the delta complex and PolE1/DNApol-epsilon255 in the epsilon complex.

The protein resides in the nucleus. It localises to the chromosome. Its subcellular location is the cytoplasm. Its function is as follows. Likely to be an auxiliary protein of DNA polymerase delta complex and is probably involved in the control of DNA replication and repair by increasing the polymerase's processibility. May function independently of PCNA during DNA repair. In Drosophila melanogaster (Fruit fly), this protein is Proliferating cell nuclear antigen 2.